A 164-amino-acid polypeptide reads, in one-letter code: HTH-type transcriptional regulator IscR (164 aa).

The 130-residue stretch at 2–131 (RLTSKGRYAV…NNITLDELVN (130 aa)) folds into the HTH rrf2-type domain. The H-T-H motif DNA-binding region spans 28–51 (LADISERQGISLSYLEQLFSRLRK). [2Fe-2S] cluster-binding residues include C92, C98, and C104.

The cofactor is [2Fe-2S] cluster.

Functionally, regulates the transcription of several operons and genes involved in the biogenesis of Fe-S clusters and Fe-S-containing proteins. In Pectobacterium atrosepticum (strain SCRI 1043 / ATCC BAA-672) (Erwinia carotovora subsp. atroseptica), this protein is HTH-type transcriptional regulator IscR.